A 101-amino-acid chain; its full sequence is Putative fatty acid-binding protein 5-like protein 3 (101 aa).

It belongs to the calycin superfamily. Fatty-acid binding protein (FABP) family.

High specificity for fatty acids. The protein is Putative fatty acid-binding protein 5-like protein 3 (FABP5P3) of Homo sapiens (Human).